The primary structure comprises 80 residues: Omega-conotoxin-like PuIA (80 aa).

The N-terminal stretch at 1–22 (MKLTCVMIVAVLFLTAWTFVTA) is a signal peptide. Positions 23–50 (DSIRALEDLFAKAPDEMENSGASPLNER) are excised as a propeptide. Intrachain disulfides connect Cys-52–Cys-70, Cys-59–Cys-74, and Cys-69–Cys-78.

This sequence belongs to the conotoxin O1 superfamily. Expressed by the venom duct.

The protein localises to the secreted. In terms of biological role, omega-conotoxins act at presynaptic membranes, they bind and block voltage-gated calcium channels (Cav). This chain is Omega-conotoxin-like PuIA, found in Conus pulicarius (Flea-bitten cone).